Reading from the N-terminus, the 102-residue chain is Omega-hexatoxin-Hi2b (102 aa).

The signal sequence occupies residues 1-23 (MKFSKLSLTLALILTQAIFVLCG). The propeptide occupies 24–56 (KINEDFMENGLESHALHDEIRKPIDTEKADAER). 3 disulfide bridges follow: C61/C75, C68/C81, and C74/C86. A Leucine amide modification is found at L98. Positions 100 to 102 (RAL) are excised as a propeptide.

This sequence belongs to the neurotoxin 15 family. 02 (omega-actx) subfamily. In terms of tissue distribution, expressed by the venom gland.

The protein resides in the secreted. Functionally, potent inhibitor of insect, but not mammalian, voltage-gated calcium channels (Cav). This is Omega-hexatoxin-Hi2b from Hadronyche infensa (Fraser island funnel-web spider).